Consider the following 252-residue polypeptide: Adaptation to cold protein B (252 aa).

Interacts with AtcC, but not with AtcA and AtcJ. Interacts with the RNA polymerase subunits RpoB and RpoC.

Its function is as follows. Involved in cold adaptation. Directly interacts with the RNA polymerase and decreases its activity. May direct the DnaK chaperone to the RNA polymerase to sustain life at low temperatures. Overproduction prevents bacterial growth due to RNA polymerase inhibition. The chain is Adaptation to cold protein B from Shewanella oneidensis (strain ATCC 700550 / JCM 31522 / CIP 106686 / LMG 19005 / NCIMB 14063 / MR-1).